An 802-amino-acid chain; its full sequence is Acetyl-CoA decarbonylase/synthase complex subunit alpha 1 (802 aa).

[4Fe-4S] cluster-binding residues include Cys68, Cys71, Cys76, and Cys86. Residue His109 participates in CO binding. 3 residues coordinate [Ni-4Fe-4S] cluster: His243, Cys271, and Cys310. 4Fe-4S ferredoxin-type domains lie at 395–424 and 435–464; these read DEAL…VDQG and SKLA…INVI. [4Fe-4S] cluster contacts are provided by Cys405, Cys408, Cys411, Cys415, Cys444, Cys447, Cys450, and Cys454. Residues Cys512, Cys541, and Cys576 each coordinate [Ni-4Fe-4S] cluster.

This sequence belongs to the Ni-containing carbon monoxide dehydrogenase family. Heterotetramer of two alpha and two epsilon subunits. The ACDS complex is made up of alpha, epsilon, beta, gamma and delta subunits with a probable stoichiometry of (alpha(2)epsilon(2))(4)-beta(8)-(gamma(1)delta(1))(8). [4Fe-4S] cluster serves as cofactor. The cofactor is [Ni-4Fe-4S] cluster.

The enzyme catalyses CO + 2 oxidized [2Fe-2S]-[ferredoxin] + H2O = 2 reduced [2Fe-2S]-[ferredoxin] + CO2 + 2 H(+). Functionally, part of the ACDS complex that catalyzes the reversible cleavage of acetyl-CoA, allowing autotrophic growth from CO(2). The alpha-epsilon subcomponent functions as a carbon monoxide dehydrogenase. The sequence is that of Acetyl-CoA decarbonylase/synthase complex subunit alpha 1 from Archaeoglobus fulgidus (strain ATCC 49558 / DSM 4304 / JCM 9628 / NBRC 100126 / VC-16).